The sequence spans 267 residues: Translation initiation factor 2 subunit alpha (267 aa).

The S1 motif domain occupies 17-88 (GEIVIGTVKR…KRGHIDLSIK (72 aa)).

The protein belongs to the eIF-2-alpha family. As to quaternary structure, heterotrimer composed of an alpha, a beta and a gamma chain.

In terms of biological role, eIF-2 functions in the early steps of protein synthesis by forming a ternary complex with GTP and initiator tRNA. This is Translation initiation factor 2 subunit alpha (eif2a) from Archaeoglobus fulgidus (strain ATCC 49558 / DSM 4304 / JCM 9628 / NBRC 100126 / VC-16).